The primary structure comprises 963 residues: Translation initiation factor IF-2 (963 aa).

Residues 53–77 (SHGQADDSARKKITLTKRETSEIRQ) show a composition bias toward basic and acidic residues. Positions 53–377 (SHGQADDSAR…RSNFQAPTEP (325 aa)) are disordered. Over residues 78–87 (SDATGKTRTV) the composition is skewed to polar residues. Composition is skewed to basic and acidic residues over residues 98-110 (IKRD…HQAD), 123-183 (EEAR…KAEE), 197-250 (DTSR…EAEA), and 267-278 (PSERKAEEKKAE). Positions 343 to 356 (SSGGVGGWRGGPRG) are enriched in gly residues. A tr-type G domain is found at 463–632 (PRPPVVTVMG…SLQAEVLELK (170 aa)). Residues 472–479 (GHVDHGKT) are G1. 472–479 (GHVDHGKT) provides a ligand contact to GTP. A G2 region spans residues 497-501 (GITQH). Positions 518-521 (DTPG) are G3. Residues 518 to 522 (DTPGH) and 572 to 575 (NKVD) contribute to the GTP site. The G4 stretch occupies residues 572-575 (NKVD). The tract at residues 608–610 (SAK) is G5.

It belongs to the TRAFAC class translation factor GTPase superfamily. Classic translation factor GTPase family. IF-2 subfamily.

The protein resides in the cytoplasm. Its function is as follows. One of the essential components for the initiation of protein synthesis. Protects formylmethionyl-tRNA from spontaneous hydrolysis and promotes its binding to the 30S ribosomal subunits. Also involved in the hydrolysis of GTP during the formation of the 70S ribosomal complex. The protein is Translation initiation factor IF-2 of Cupriavidus taiwanensis (strain DSM 17343 / BCRC 17206 / CCUG 44338 / CIP 107171 / LMG 19424 / R1) (Ralstonia taiwanensis (strain LMG 19424)).